Here is an 88-residue protein sequence, read N- to C-terminus: U1-hexatoxin-Iw1c (88 aa).

An N-terminal signal peptide occupies residues 1-17 (LKFVVLICLVIMASTSA). Gln18 is modified (pyrrolidone carboxylic acid). 5 disulfides stabilise this stretch: Cys20–Cys31, Cys25–Cys39, Cys30–Cys65, Cys49–Cys73, and Cys67–Cys80. Positions 86 to 88 (RSE) are excised as a propeptide.

This sequence belongs to the MIT-like AcTx family. Expressed by the venom gland.

The protein resides in the secreted. The chain is U1-hexatoxin-Iw1c from Illawarra wisharti (Illawarra funnel-web spider).